Consider the following 185-residue polypeptide: UPF0301 protein Csal_0058 (185 aa).

It belongs to the UPF0301 (AlgH) family.

This chain is UPF0301 protein Csal_0058, found in Chromohalobacter salexigens (strain ATCC BAA-138 / DSM 3043 / CIP 106854 / NCIMB 13768 / 1H11).